Reading from the N-terminus, the 321-residue chain is Lipoyl synthase (321 aa).

[4Fe-4S] cluster-binding residues include cysteine 68, cysteine 73, cysteine 79, cysteine 94, cysteine 98, cysteine 101, and serine 308. The Radical SAM core domain maps to 80-297 (FNHGTATFMI…KAEALAMGFT (218 aa)).

The protein belongs to the radical SAM superfamily. Lipoyl synthase family. [4Fe-4S] cluster is required as a cofactor.

The protein resides in the cytoplasm. The enzyme catalyses [[Fe-S] cluster scaffold protein carrying a second [4Fe-4S](2+) cluster] + N(6)-octanoyl-L-lysyl-[protein] + 2 oxidized [2Fe-2S]-[ferredoxin] + 2 S-adenosyl-L-methionine + 4 H(+) = [[Fe-S] cluster scaffold protein] + N(6)-[(R)-dihydrolipoyl]-L-lysyl-[protein] + 4 Fe(3+) + 2 hydrogen sulfide + 2 5'-deoxyadenosine + 2 L-methionine + 2 reduced [2Fe-2S]-[ferredoxin]. The protein operates within protein modification; protein lipoylation via endogenous pathway; protein N(6)-(lipoyl)lysine from octanoyl-[acyl-carrier-protein]: step 2/2. Its function is as follows. Catalyzes the radical-mediated insertion of two sulfur atoms into the C-6 and C-8 positions of the octanoyl moiety bound to the lipoyl domains of lipoate-dependent enzymes, thereby converting the octanoylated domains into lipoylated derivatives. The chain is Lipoyl synthase from Escherichia fergusonii (strain ATCC 35469 / DSM 13698 / CCUG 18766 / IAM 14443 / JCM 21226 / LMG 7866 / NBRC 102419 / NCTC 12128 / CDC 0568-73).